A 607-amino-acid chain; its full sequence is Rap1 GTPase-GDP dissociation stimulator 1 (607 aa).

The Nuclear export signal (NES) motif lies at 4–13 (LSDTLKKLKI). ARM repeat units follow at residues 89-131 (GLIS…DQAG) and 170-211 (DSLQ…NLAE). The interval 122-170 (EGRSAVDQAGGAQIVIDHLRSLCSITDPANEKLLTVFCGMLMNYSNEND) is prevents binding to prenylated RHOA. Lysine 230 bears the N6-acetyllysine mark. An interacts with polybasic regions in GTPases region spans residues 239 to 255 (DKREMIFEVLAPLAEND). ARM repeat units follow at residues 347–390 (DANC…NLAI), 391–431 (PVIN…MLID), and 479–519 (SKDV…LIAA). The tract at residues 379–428 (HAALSALRNLAIPVINKAKMLSAGVTEAVLKFLKSEMPPVQFKLLGTLRM) is critical for catalytic activity.

In terms of assembly, interacts with RABL3. Interacts with RHOT1. Interacts with unprenylated RHOA; the interaction is direct. Interacts with RAP1A. Interacts with KRAS. Interacts with RAC1. Interacts with RAP1B. Preferentially interacts with unprenylated GTPases that will become geranylgeranylated. May also interact with prenylated GTPases. As to quaternary structure, interacts with prenylated RHOA; the interaction is direct and in a 1:1 stoichiometry. Interacts with RAP1A. Interacts with KRAS. Interacts with RAC1. Interacts with RAP1B. Preferentially interacts with prenylated GTPases. Forms covalent cross-links mediated by transglutaminase TGM2, between a glutamine and the epsilon-amino group of a lysine residue, forming homopolymers and heteropolymers.

It is found in the cytoplasm. Its subcellular location is the cytosol. The protein localises to the endoplasmic reticulum. It localises to the mitochondrion. The protein resides in the nucleus. Its function is as follows. Acts as a GEF (guanine nucleotide exchange factor) for the Rho family of small GTP-binding proteins (G proteins) that stimulates the dissociation of GDP to enable subsequent binding of GTP. Additionally, appears to chaperone the processing and/or trafficking of small GTPases containing a C-terminal polybasic region independently of GEF activity. Targets include RAP1A/RAP1B, RHOA, RHOB, RHOC, RAC1 and KRAS. Regulates mitochondrial dynamics by controlling RHOT function to promote mitochondrial fission during high calcium conditions. Able to promote the Ca(2+) release from the endoplasmic reticulum via both inositol trisphosphate (Ins3P) and ryanodine sensitive receptors leading to a enhanced mitochondrial Ca(2+) uptake. In terms of biological role, acts as a GEF (guanine nucleotide exchange factor) for unprenylated RHOA. Chaperones the entry and passage of small GTPases through the prenylation pathway. Recognizes the last amino acid in the GTPase C-terminal CAAX motif with a preference for 'Leu' over 'Met', indicating involvement in the geranylgeranylation pathway. Functionally, acts as a GEF (guanine nucleotide exchange factor) for prenylated RHOA. Acts as a GEF for RHOC. Chaperones the downstream trafficking and/or processing of small newly prenylated GTPases. Escorts RAC1 to the nucleus. This Homo sapiens (Human) protein is Rap1 GTPase-GDP dissociation stimulator 1.